The chain runs to 288 residues: Energy-coupling factor transporter ATP-binding protein EcfA2 (288 aa).

The region spanning 3 to 246 is the ABC transporter domain; the sequence is IKLEQLGYCY…PDELVDLGLS (244 aa). 40 to 47 contacts ATP; the sequence is GHTGSGKS.

It belongs to the ABC transporter superfamily. Energy-coupling factor EcfA family. Forms a stable energy-coupling factor (ECF) transporter complex composed of 2 membrane-embedded substrate-binding proteins (S component), 2 ATP-binding proteins (A component) and 2 transmembrane proteins (T component).

It localises to the cell membrane. In terms of biological role, ATP-binding (A) component of a common energy-coupling factor (ECF) ABC-transporter complex. Unlike classic ABC transporters this ECF transporter provides the energy necessary to transport a number of different substrates. This is Energy-coupling factor transporter ATP-binding protein EcfA2 from Listeria innocua serovar 6a (strain ATCC BAA-680 / CLIP 11262).